An 88-amino-acid chain; its full sequence is Small ribosomal subunit protein bS20 (88 aa).

The segment at Met-1 to Arg-20 is disordered.

Belongs to the bacterial ribosomal protein bS20 family.

Its function is as follows. Binds directly to 16S ribosomal RNA. The chain is Small ribosomal subunit protein bS20 from Phytoplasma australiense.